An 876-amino-acid polypeptide reads, in one-letter code: Phosphoenolpyruvate carboxylase (876 aa).

Residues histidine 138 and lysine 544 contribute to the active site.

The protein belongs to the PEPCase type 1 family. The cofactor is Mg(2+).

The enzyme catalyses oxaloacetate + phosphate = phosphoenolpyruvate + hydrogencarbonate. In terms of biological role, forms oxaloacetate, a four-carbon dicarboxylic acid source for the tricarboxylic acid cycle. The protein is Phosphoenolpyruvate carboxylase of Marinomonas sp. (strain MWYL1).